Consider the following 387-residue polypeptide: Alpha-sarcoglycan (387 aa).

The N-terminal stretch at 1–23 (MAAAVTWIPLLAGLLAGLRDTKA) is a signal peptide. Over 24-293 (QQTTLHLLVG…RDFLTDALVT (270 aa)) the chain is Extracellular. Asn-174 and Asn-246 each carry an N-linked (GlcNAc...) asparagine glycan. The chain crosses the membrane as a helical span at residues 294-314 (LLVPLLVALLLTLLLAYIMCF). Residues 315–387 (RREGRLKRDM…AQMPLILDQH (73 aa)) are Cytoplasmic-facing. The residue at position 377 (Ser-377) is a Phosphoserine.

This sequence belongs to the sarcoglycan alpha/epsilon family. As to quaternary structure, cross-link to form 2 major subcomplexes: one consisting of SGCB, SGCD and SGCG and the other consisting of SGCB and SGCD. The association between SGCB and SGCG is particularly strong while SGCA is loosely associated with the other sarcoglycans. Interacts with the syntrophin SNTA1. Striated muscle, both skeletal and cardiac.

It localises to the cell membrane. Its subcellular location is the sarcolemma. The protein localises to the cytoplasm. It is found in the cytoskeleton. Functionally, component of the sarcoglycan complex, a subcomplex of the dystrophin-glycoprotein complex which forms a link between the F-actin cytoskeleton and the extracellular matrix. In Mus musculus (Mouse), this protein is Alpha-sarcoglycan (Sgca).